A 148-amino-acid polypeptide reads, in one-letter code: MSIILKIKKTDDAKDLPLPAYMSEGAAGMDLYANVKEEVILQPGEIKLIPTGIQIELPPNFEAQIRPRSGLALNYGITLLNTPGTIDSDYRGEIKLIVINLGKEAVKIARGQRIAQMVINQIVRPTIVEAEILSETKRDEGGFGHTGI.

Substrate-binding positions include 68–70 (RSG), asparagine 81, 85–87 (TID), and lysine 95.

The protein belongs to the dUTPase family. Requires Mg(2+) as cofactor.

The enzyme catalyses dUTP + H2O = dUMP + diphosphate + H(+). It functions in the pathway pyrimidine metabolism; dUMP biosynthesis; dUMP from dCTP (dUTP route): step 2/2. Functionally, this enzyme is involved in nucleotide metabolism: it produces dUMP, the immediate precursor of thymidine nucleotides and it decreases the intracellular concentration of dUTP so that uracil cannot be incorporated into DNA. In Thermoanaerobacter sp. (strain X514), this protein is Deoxyuridine 5'-triphosphate nucleotidohydrolase.